The primary structure comprises 132 residues: Small ribosomal subunit protein uS8 (132 aa).

This sequence belongs to the universal ribosomal protein uS8 family. As to quaternary structure, part of the 30S ribosomal subunit. Contacts proteins S5 and S12.

In terms of biological role, one of the primary rRNA binding proteins, it binds directly to 16S rRNA central domain where it helps coordinate assembly of the platform of the 30S subunit. The polypeptide is Small ribosomal subunit protein uS8 (Francisella tularensis subsp. tularensis (strain FSC 198)).